The chain runs to 246 residues: Sulfate transporter CysZ (246 aa).

A run of 4 helical transmembrane segments spans residues 24 to 44 (LFVLIPLTLNLLVFALLIGFA), 69 to 89 (IVWPLFVLLVLVIVFFTFTMV), 148 to 168 (LLVLSFVPGVNLIATPLWILF), and 214 to 234 (LLIPLVNLVMMPAAVAGATLF).

This sequence belongs to the CysZ family.

The protein localises to the cell inner membrane. High affinity, high specificity proton-dependent sulfate transporter, which mediates sulfate uptake. Provides the sulfur source for the cysteine synthesis pathway. This is Sulfate transporter CysZ from Pseudomonas aeruginosa (strain LESB58).